The primary structure comprises 768 residues: Ral guanine nucleotide dissociation stimulator-like 1 (768 aa).

An N-terminal Ras-GEF domain is found at 65 to 196 (KIRTIKAGTL…RAQNLLEQFQ (132 aa)). Residues 232–501 (SEDLVAEQLT…YALSCEIEAA (270 aa)) form the Ras-GEF domain. At serine 520 the chain carries Phosphoserine. The disordered stretch occupies residues 530-623 (PGSTPTKEQP…PPTCNNNPKI (94 aa)). Composition is skewed to low complexity over residues 541–561 (SAAS…SCES) and 586–596 (ESSSSCSSIHS). A compositionally biased stretch (polar residues) spans 597 to 621 (MDTNSSGMSSLINPLSSPPTCNNNP). The Ras-associating domain maps to 648-735 (DTCIIRISVE…FDFILRKKNS (88 aa)).

Interacts with Ras.

Functionally, probable guanine nucleotide exchange factor. This is Ral guanine nucleotide dissociation stimulator-like 1 (Rgl1) from Mus musculus (Mouse).